Reading from the N-terminus, the 564-residue chain is MAKNTTNRHYSLRKLKTGTASVAVALTVVGAGLVAGQTVRADHSDLVAEKQRLEDLGQKFERLKQRSELYLQQYYDNKSNGYKGDWYVQQLKMLNRDLEQAYNELSGEAHKDALGKLGIDNADLKAKITELEKSVEEKNDVLSQIKKELEEAEKDIQFGREVHAADLLRHKQEIAEKENVISKLNGELQPLKQKVDETDRNLQQEKQKVLSLEQQLAVTKENAKKDFELAALGHQLADKEYNAKIAELESKLADAKKDFELAALGHQHAHNEYQAKLAEKDGQIKQLEEQKQILDASRKGTARDLEAVRQAKKATEAELNNLKAELAKVTEQKQILDASRKGTARDLEAVRKSKKQQVEAALKQLEEQNKISEASRKGLRRDLDTSREAKKQVEKDLANLTAELDKVKEEKQISDASRQGLRRDLDASREAKKQVEKALEEANSKLAALEKLNKDLEESKKLTEKEKAELQAKLEAEAKALKEQLAKQAEELAKLRAGKASDSQTPDAKPGNKAVPGKGQAPQAGTKPNQNKAPMKETKRQLPSTGETANPFFTAAALTVMAAA.

An N-terminal signal peptide occupies residues 1 to 41 (MAKNTTNRHYSLRKLKTGTASVAVALTVVGAGLVAGQTVRA). Residues 44–505 (SDLVAEKQRL…RAGKASDSQT (462 aa)) adopt a coiled-coil conformation. 4 C repeats span residues 285–319 (KQLE…EAEL), 327–361 (AKVT…VEAA), 363–397 (KQLE…EKDL), and 405–439 (DKVK…EKAL). Disordered regions lie at residues 372–391 (SEAS…EAKK) and 404–438 (LDKV…VEKA). Basic and acidic residues-rich tracts occupy residues 404 to 413 (LDKVKEEKQI) and 421 to 438 (LRRD…VEKA). 4 D repeats span residues 472 to 477 (AKLEAE), 478 to 483 (AKALKE), 486 to 491 (AKQAEE), and 493 to 498 (AKLRAG). The disordered stretch occupies residues 493-550 (AKLRAGKASDSQTPDAKPGNKAVPGKGQAPQAGTKPNQNKAPMKETKRQLPSTGETAN). Residues 542-546 (LPSTG) carry the LPXTG sorting signal motif. Thr-545 is subject to Pentaglycyl murein peptidoglycan amidated threonine. A propeptide spans 546 to 564 (GETANPFFTAAALTVMAAA) (removed by sortase).

It belongs to the M protein family.

The protein localises to the secreted. The protein resides in the cell wall. Functionally, this protein is one of the different antigenic serotypes of protein M. Protein M is closely associated with virulence of the bacterium and can render the organism resistant to phagocytosis. The chain is M protein, serotype 12 (emm12) from Streptococcus pyogenes.